Consider the following 134-residue polypeptide: MESLSQLVKSTLPNYLSNLPIPDSVGGWFKLSFKDWLALIPPTVVVAGIGYTGYLAFCPAAQARCSATKSGRCNNQIRKHEPKVVDTIDVEDIADKAAFCRCWKSKNWPYCDGSHGEHNKLTGDNVGPVVVKKQ.

At 1–35 (MESLSQLVKSTLPNYLSNLPIPDSVGGWFKLSFKD) the chain is on the lumenal side. A helical membrane pass occupies residues 36–58 (WLALIPPTVVVAGIGYTGYLAFC). Topologically, residues 59-134 (PAAQARCSAT…NVGPVVVKKQ (76 aa)) are cytoplasmic. [2Fe-2S] cluster is bound by residues C100, C102, C111, and H115.

It belongs to the CISD protein family. CISD2 subfamily. [2Fe-2S] cluster is required as a cofactor.

The protein localises to the endoplasmic reticulum membrane. The protein is CDGSH iron-sulfur domain-containing protein 2 homolog of Drosophila ananassae (Fruit fly).